The following is a 98-amino-acid chain: Large ribosomal subunit protein uL23 (98 aa).

This sequence belongs to the universal ribosomal protein uL23 family. In terms of assembly, part of the 50S ribosomal subunit. Contacts protein L29, and trigger factor when it is bound to the ribosome.

One of the early assembly proteins it binds 23S rRNA. One of the proteins that surrounds the polypeptide exit tunnel on the outside of the ribosome. Forms the main docking site for trigger factor binding to the ribosome. This Hydrogenovibrio crunogenus (strain DSM 25203 / XCL-2) (Thiomicrospira crunogena) protein is Large ribosomal subunit protein uL23.